Reading from the N-terminus, the 438-residue chain is tRNA modification GTPase MnmE (438 aa).

Arg-20, Glu-76, and Lys-115 together coordinate (6S)-5-formyl-5,6,7,8-tetrahydrofolate. In terms of domain architecture, TrmE-type G spans 210 to 370; that stretch reads NFTIMILGRR…LKCFINKIVD (161 aa). Asn-220 contacts K(+). GTP contacts are provided by residues 220 to 225, 239 to 245, and 264 to 267; these read NVGKST, TNIPGTT, and DTAG. Mg(2+) is bound at residue Ser-224. 3 residues coordinate K(+): Thr-239, Ile-241, and Thr-244. Mg(2+) is bound at residue Thr-245. Lys-438 lines the (6S)-5-formyl-5,6,7,8-tetrahydrofolate pocket.

Belongs to the TRAFAC class TrmE-Era-EngA-EngB-Septin-like GTPase superfamily. TrmE GTPase family. As to quaternary structure, homodimer. Heterotetramer of two MnmE and two MnmG subunits. It depends on K(+) as a cofactor.

It is found in the cytoplasm. Its function is as follows. Exhibits a very high intrinsic GTPase hydrolysis rate. Involved in the addition of a carboxymethylaminomethyl (cmnm) group at the wobble position (U34) of certain tRNAs, forming tRNA-cmnm(5)s(2)U34. The protein is tRNA modification GTPase MnmE of Carsonella ruddii (strain PV).